The chain runs to 67 residues: MPKMKTKSSAKKRFKITATGKVRAAAAGKRHGMIKRSNKFIRDARGTMVLAEPDGKKVVKNYLPNGL.

This sequence belongs to the bacterial ribosomal protein bL35 family.

The polypeptide is Large ribosomal subunit protein bL35 (Sinorhizobium medicae (strain WSM419) (Ensifer medicae)).